The following is a 579-amino-acid chain: Protein inscuteable homolog (579 aa).

An important for interaction with GPSM2 region spans residues 74 to 89; the sequence is SVQRWMEDLKLMTECE. The short motif at 576-579 is the PDZ-binding element; that stretch reads ESFV.

Interacts with ALS2CR19/PAR3B and GPSM1/AGS3. Interacts with F2RL2/PAR3. Interacts with GPSM2/LGN (via TPR repeat region). Expressed in brain, kidney, liver, testis and skin.

The protein resides in the cytoplasm. It is found in the cell cortex. In terms of biological role, may function as an adapter linking the Par3 complex to the GPSM1/GPSM2 complex. Involved in spindle orientation during mitosis. May regulate cell proliferation and differentiation in the developing nervous system. May play a role in the asymmetric division of fibroblasts and participate in the process of stratification of the squamous epithelium. This is Protein inscuteable homolog (Insc) from Mus musculus (Mouse).